We begin with the raw amino-acid sequence, 444 residues long: Probable polygalacturonase At1g80170 (444 aa).

The first 28 residues, Met1–Ala28, serve as a signal peptide directing secretion. 6 PbH1 repeats span residues Cys208–Val234, Ser235–Lys256, Ser258–Ser278, Val288–Thr309, Val317–Gln338, and Thr351–Cys378. Catalysis depends on Asp249, which acts as the Proton donor. Residue His272 is part of the active site.

It belongs to the glycosyl hydrolase 28 family. Expressed in young, mature and dehiscing anthers. Found in stems, but not in roots or in abscission zone of floral organs.

It localises to the secreted. The protein localises to the cell wall. It catalyses the reaction (1,4-alpha-D-galacturonosyl)n+m + H2O = (1,4-alpha-D-galacturonosyl)n + (1,4-alpha-D-galacturonosyl)m.. In Arabidopsis thaliana (Mouse-ear cress), this protein is Probable polygalacturonase At1g80170.